A 215-amino-acid chain; its full sequence is ATP phosphoribosyltransferase (215 aa).

It belongs to the ATP phosphoribosyltransferase family. Short subfamily. Heteromultimer composed of HisG and HisZ subunits.

The protein localises to the cytoplasm. It carries out the reaction 1-(5-phospho-beta-D-ribosyl)-ATP + diphosphate = 5-phospho-alpha-D-ribose 1-diphosphate + ATP. It functions in the pathway amino-acid biosynthesis; L-histidine biosynthesis; L-histidine from 5-phospho-alpha-D-ribose 1-diphosphate: step 1/9. Its function is as follows. Catalyzes the condensation of ATP and 5-phosphoribose 1-diphosphate to form N'-(5'-phosphoribosyl)-ATP (PR-ATP). Has a crucial role in the pathway because the rate of histidine biosynthesis seems to be controlled primarily by regulation of HisG enzymatic activity. The polypeptide is ATP phosphoribosyltransferase (hisG) (Clostridium acetobutylicum (strain ATCC 824 / DSM 792 / JCM 1419 / IAM 19013 / LMG 5710 / NBRC 13948 / NRRL B-527 / VKM B-1787 / 2291 / W)).